The chain runs to 360 residues: Phospho-N-acetylmuramoyl-pentapeptide-transferase (360 aa).

The next 10 helical transmembrane spans lie at 24 to 44 (RAVMAALTALAFSLMFGPWTI), 69 to 89 (GTPTMGGSLILTAITVSTLLW), 92 to 112 (WANPYIWILLGVLLATGALGF), 133 to 153 (MVWQSSVAVIAGLALFYLAAN), 158 to 178 (ILIVPFFKQIALPLGVVGFLV), 199 to 219 (GLAAFPVVLVAAGLAIFAYVS), 239 to 259 (VAIFCTAMCGACLGFLWFNAY), 263 to 283 (VFMGDVGALALGAALGTVAVI), 288 to 308 (FVLVIMGGLFVVEAVSVMLQV), and 337 to 357 (QVVVRFWIITIVLVLIGLSTL).

This sequence belongs to the glycosyltransferase 4 family. MraY subfamily. Mg(2+) serves as cofactor.

Its subcellular location is the cell inner membrane. It catalyses the reaction UDP-N-acetyl-alpha-D-muramoyl-L-alanyl-gamma-D-glutamyl-meso-2,6-diaminopimeloyl-D-alanyl-D-alanine + di-trans,octa-cis-undecaprenyl phosphate = di-trans,octa-cis-undecaprenyl diphospho-N-acetyl-alpha-D-muramoyl-L-alanyl-D-glutamyl-meso-2,6-diaminopimeloyl-D-alanyl-D-alanine + UMP. It functions in the pathway cell wall biogenesis; peptidoglycan biosynthesis. Catalyzes the initial step of the lipid cycle reactions in the biosynthesis of the cell wall peptidoglycan: transfers peptidoglycan precursor phospho-MurNAc-pentapeptide from UDP-MurNAc-pentapeptide onto the lipid carrier undecaprenyl phosphate, yielding undecaprenyl-pyrophosphoryl-MurNAc-pentapeptide, known as lipid I. This is Phospho-N-acetylmuramoyl-pentapeptide-transferase from Neisseria gonorrhoeae (strain ATCC 700825 / FA 1090).